A 908-amino-acid polypeptide reads, in one-letter code: Isoleucine--tRNA ligase (908 aa).

Residues 59-69 (PYANGDLHIGH) carry the 'HIGH' region motif. L-isoleucyl-5'-AMP is bound at residue Glu554. A 'KMSKS' region motif is present at residues 595 to 599 (KMSKS). ATP is bound at residue Lys598. Zn(2+)-binding residues include Cys882, Cys885, Cys898, and Cys901.

Belongs to the class-I aminoacyl-tRNA synthetase family. IleS type 1 subfamily. In terms of assembly, monomer. Zn(2+) is required as a cofactor.

It localises to the cytoplasm. It catalyses the reaction tRNA(Ile) + L-isoleucine + ATP = L-isoleucyl-tRNA(Ile) + AMP + diphosphate. Catalyzes the attachment of isoleucine to tRNA(Ile). As IleRS can inadvertently accommodate and process structurally similar amino acids such as valine, to avoid such errors it has two additional distinct tRNA(Ile)-dependent editing activities. One activity is designated as 'pretransfer' editing and involves the hydrolysis of activated Val-AMP. The other activity is designated 'posttransfer' editing and involves deacylation of mischarged Val-tRNA(Ile). The polypeptide is Isoleucine--tRNA ligase (Mesoplasma florum (strain ATCC 33453 / NBRC 100688 / NCTC 11704 / L1) (Acholeplasma florum)).